Here is a 102-residue protein sequence, read N- to C-terminus: Small ribosomal subunit protein uS10 (102 aa).

It belongs to the universal ribosomal protein uS10 family. As to quaternary structure, part of the 30S ribosomal subunit.

Involved in the binding of tRNA to the ribosomes. In Citrifermentans bemidjiense (strain ATCC BAA-1014 / DSM 16622 / JCM 12645 / Bem) (Geobacter bemidjiensis), this protein is Small ribosomal subunit protein uS10.